Here is a 111-residue protein sequence, read N- to C-terminus: Elevenin (111 aa).

An N-terminal signal peptide occupies residues 1–24; sequence MAPSQKALLVLVLSMLLTASDSRA. Cysteine 29 and cysteine 38 are disulfide-bonded. Residues 44–111 constitute a propeptide that is removed on maturation; it reads KRGGDSLSVG…TEQLDRLLTL (68 aa).

This sequence belongs to the elevenin family. As to quaternary structure, monomer. In terms of tissue distribution, expressed by the venom duct.

The protein resides in the secreted. Functionally, may mimic the function of prey elevenin neuropeptide. In vivo, intracranial injection in mice induces hyperactivity. The sequence is that of Elevenin from Conus ebraeus (Hebrew cone).